Reading from the N-terminus, the 203-residue chain is Linker for activation of T-cells family member 2 (203 aa).

The Extracellular portion of the chain corresponds to 1 to 6; that stretch reads MSAELE. A helical; Signal-anchor for type III membrane protein transmembrane segment spans residues 7–27; that stretch reads LLWPVSGLLLLLLGATAWLCV. 2 S-palmitoyl cysteine lipidation sites follow: cysteine 26 and cysteine 29. Over 28 to 203 the chain is Cytoplasmic; sequence HCSRPGVKRN…NGDVAAAENI (176 aa). At tyrosine 59 the chain carries Phosphotyrosine. 2 positions are modified to phosphoserine: serine 60 and serine 95. 3 positions are modified to phosphotyrosine: tyrosine 139, tyrosine 160, and tyrosine 192. The segment at 171–203 is disordered; it reads ESKRTMGAPMSLSGSPDEEPDYVNGDVAAAENI.

In terms of assembly, when phosphorylated, interacts with GRB2. May also interact with SOS1, GAB1 and CBL. In terms of processing, phosphorylated on tyrosines following cross-linking of BCR in B-cells, high affinity IgG receptor (FCGR1) in myeloid cells, or high affinity IgE receptor (FCER1) in mast cells; which induces the recruitment of GRB2. As to expression, strongly expressed in testis. Expressed in heart, spleen and lung. Present in B-cells and mast cells (at protein level).

The protein localises to the cell membrane. Involved in FCER1 (high affinity immunoglobulin epsilon receptor)-mediated signaling in mast cells. May also be involved in BCR (B-cell antigen receptor)-mediated signaling in B-cells and FCGR1 (high affinity immunoglobulin gamma Fc receptor I)-mediated signaling in myeloid cells. Couples activation of these receptors and their associated kinases with distal intracellular events through the recruitment of GRB2. The protein is Linker for activation of T-cells family member 2 (Lat2) of Mus musculus (Mouse).